Reading from the N-terminus, the 159-residue chain is MAPKGSQRVVNKVVAENRKARFNYEIIDTYEAGLVLMGTEVKSLREGKANIAESYASDEGGEIWLINSYLPEYLQANRFNHEPRRRRKLLLSGREIHRLRSAVNREGMTLIPLKIYFNDRGRAKMELALAKGKKLHDKRESEKERDWNRQKSRLLKDNG.

The disordered stretch occupies residues 131–159; it reads KGKKLHDKRESEKERDWNRQKSRLLKDNG. Positions 137-159 are enriched in basic and acidic residues; that stretch reads DKRESEKERDWNRQKSRLLKDNG.

It belongs to the SmpB family.

The protein resides in the cytoplasm. Required for rescue of stalled ribosomes mediated by trans-translation. Binds to transfer-messenger RNA (tmRNA), required for stable association of tmRNA with ribosomes. tmRNA and SmpB together mimic tRNA shape, replacing the anticodon stem-loop with SmpB. tmRNA is encoded by the ssrA gene; the 2 termini fold to resemble tRNA(Ala) and it encodes a 'tag peptide', a short internal open reading frame. During trans-translation Ala-aminoacylated tmRNA acts like a tRNA, entering the A-site of stalled ribosomes, displacing the stalled mRNA. The ribosome then switches to translate the ORF on the tmRNA; the nascent peptide is terminated with the 'tag peptide' encoded by the tmRNA and targeted for degradation. The ribosome is freed to recommence translation, which seems to be the essential function of trans-translation. The protein is SsrA-binding protein of Rhizobium leguminosarum bv. trifolii (strain WSM2304).